Consider the following 122-residue polypeptide: Large ribosomal subunit protein uL14 (122 aa).

Belongs to the universal ribosomal protein uL14 family. As to quaternary structure, part of the 50S ribosomal subunit. Forms a cluster with proteins L3 and L19. In the 70S ribosome, L14 and L19 interact and together make contacts with the 16S rRNA in bridges B5 and B8.

Binds to 23S rRNA. Forms part of two intersubunit bridges in the 70S ribosome. In Campylobacter concisus (strain 13826), this protein is Large ribosomal subunit protein uL14.